A 692-amino-acid chain; its full sequence is Catalase-B (692 aa).

Residues His-69 and Asn-142 contribute to the active site. A heme-binding site is contributed by Tyr-356.

Belongs to the catalase family. The cofactor is heme.

It is found in the cytoplasm. It catalyses the reaction 2 H2O2 = O2 + 2 H2O. Its function is as follows. Occurs in almost all aerobically respiring organisms and serves to protect cells from the toxic effects of hydrogen peroxide. Its accumulation in prespore cells affords the spores protection from oxidation during prolonged dormancy. Required for normal developmental timing, possibly through a regulatory role in differentiation and morphogenesis. The polypeptide is Catalase-B (catB) (Dictyostelium discoideum (Social amoeba)).